A 189-amino-acid chain; its full sequence is Apolipophorin-3 (189 aa).

An N-terminal signal peptide occupies residues 1 to 18 (MAAKFVVVLAACVALSHS). A propeptide spanning residues 19–23 (AMVRR) is cleaved from the precursor.

It belongs to the insect apolipophorin-3 family. In terms of assembly, equilibrium between a soluble monomer and a bound lipoprotein form. Apolipophorin-3 associates with lipophorin during lipid loading until each particle contains 9 or 14 molecules of apolipophorin-3. As to expression, hemolymph.

The protein localises to the secreted. In terms of biological role, assists in the loading of diacylglycerol, generated from triacylglycerol stores in the fat body through the action of adipokinetic hormone, into lipophorin, the hemolymph lipoprotein. It increases the lipid carrying capacity of lipophorin by covering the expanding hydrophobic surface resulting from diacylglycerol uptake. It thus plays a critical role in the transport of lipids during flight in several species of insects. The polypeptide is Apolipophorin-3 (Manduca sexta (Tobacco hawkmoth)).